We begin with the raw amino-acid sequence, 38 residues long: Iota-conotoxin-like L11.5 (38 aa).

4 disulfides stabilise this stretch: C5–C19, C12–C24, C18–C29, and C23–C36.

Belongs to the conotoxin I1 superfamily. Expressed by the venom duct.

Its subcellular location is the secreted. In terms of biological role, iota-conotoxins bind to voltage-gated sodium channels (Nav) and act as agonists by shifting the voltage-dependence of activation to more hyperpolarized levels. Produces general excitatory symptoms. This is Iota-conotoxin-like L11.5 from Conus lynceus (Lynceus cone).